The chain runs to 659 residues: Threonine--tRNA ligase (659 aa).

The 61-residue stretch at 1–61 (MIDLIFPDGS…TPDLLGGGNR (61 aa)) folds into the TGS domain. Positions 249 to 541 (DHRKLGKTMD…LLENYAGHLP (293 aa)) are catalytic. Residues Cys-341, His-392, and His-518 each contribute to the Zn(2+) site. The tract at residues 637 to 659 (EEATPPDLARDRAVAAPAELAQA) is disordered.

It belongs to the class-II aminoacyl-tRNA synthetase family. Homodimer. The cofactor is Zn(2+).

It localises to the cytoplasm. It carries out the reaction tRNA(Thr) + L-threonine + ATP = L-threonyl-tRNA(Thr) + AMP + diphosphate + H(+). In terms of biological role, catalyzes the attachment of threonine to tRNA(Thr) in a two-step reaction: L-threonine is first activated by ATP to form Thr-AMP and then transferred to the acceptor end of tRNA(Thr). Also edits incorrectly charged L-seryl-tRNA(Thr). The polypeptide is Threonine--tRNA ligase (Caulobacter sp. (strain K31)).